The chain runs to 184 residues: UPF0149 protein PSPA7_5968 (184 aa).

It belongs to the UPF0149 family.

This chain is UPF0149 protein PSPA7_5968, found in Pseudomonas paraeruginosa (strain DSM 24068 / PA7) (Pseudomonas aeruginosa (strain PA7)).